The chain runs to 357 residues: Phosphoribosylformylglycinamidine cyclo-ligase (357 aa).

Belongs to the AIR synthase family.

It is found in the cytoplasm. It catalyses the reaction 2-formamido-N(1)-(5-O-phospho-beta-D-ribosyl)acetamidine + ATP = 5-amino-1-(5-phospho-beta-D-ribosyl)imidazole + ADP + phosphate + H(+). It functions in the pathway purine metabolism; IMP biosynthesis via de novo pathway; 5-amino-1-(5-phospho-D-ribosyl)imidazole from N(2)-formyl-N(1)-(5-phospho-D-ribosyl)glycinamide: step 2/2. The polypeptide is Phosphoribosylformylglycinamidine cyclo-ligase (Nitrobacter winogradskyi (strain ATCC 25391 / DSM 10237 / CIP 104748 / NCIMB 11846 / Nb-255)).